Consider the following 82-residue polypeptide: Beta-defensin 113 (82 aa).

An N-terminal signal peptide occupies residues 1–16 (MKILCIFLTFVFTVSC). Cystine bridges form between C35-C61, C42-C56, and C46-C62.

Belongs to the beta-defensin family.

The protein localises to the secreted. Its function is as follows. Has antibacterial activity. This Homo sapiens (Human) protein is Beta-defensin 113 (DEFB113).